A 458-amino-acid polypeptide reads, in one-letter code: Chromosomal replication initiator protein DnaA (458 aa).

A domain I, interacts with DnaA modulators region spans residues M1 to R79. Residues R79–S120 form a domain II region. A disordered region spans residues P92 to H114. The span at I96–P106 shows a compositional bias: polar residues. Positions N121–A338 are domain III, AAA+ region. Residues G165, G167, K168, and T169 each contribute to the ATP site. The segment at Q339–M458 is domain IV, binds dsDNA.

Belongs to the DnaA family. Oligomerizes as a right-handed, spiral filament on DNA at oriC.

Its subcellular location is the cytoplasm. In terms of biological role, plays an essential role in the initiation and regulation of chromosomal replication. ATP-DnaA binds to the origin of replication (oriC) to initiate formation of the DNA replication initiation complex once per cell cycle. Binds the DnaA box (a 9 base pair repeat at the origin) and separates the double-stranded (ds)DNA. Forms a right-handed helical filament on oriC DNA; dsDNA binds to the exterior of the filament while single-stranded (ss)DNA is stabiized in the filament's interior. The ATP-DnaA-oriC complex binds and stabilizes one strand of the AT-rich DNA unwinding element (DUE), permitting loading of DNA polymerase. After initiation quickly degrades to an ADP-DnaA complex that is not apt for DNA replication. Binds acidic phospholipids. The polypeptide is Chromosomal replication initiator protein DnaA (Psychromonas ingrahamii (strain DSM 17664 / CCUG 51855 / 37)).